Consider the following 316-residue polypeptide: Ribosomal protein L11 methyltransferase (316 aa).

Residues Thr-157, Gly-178, Asp-200, and Asn-243 each coordinate S-adenosyl-L-methionine.

It belongs to the methyltransferase superfamily. PrmA family.

It localises to the cytoplasm. It catalyses the reaction L-lysyl-[protein] + 3 S-adenosyl-L-methionine = N(6),N(6),N(6)-trimethyl-L-lysyl-[protein] + 3 S-adenosyl-L-homocysteine + 3 H(+). Its function is as follows. Methylates ribosomal protein L11. This chain is Ribosomal protein L11 methyltransferase, found in Streptococcus pneumoniae (strain ATCC 700669 / Spain 23F-1).